Here is a 431-residue protein sequence, read N- to C-terminus: Serine--tRNA ligase (431 aa).

237 to 239 (TAE) contributes to the L-serine binding site. Residue 268-270 (RSE) coordinates ATP. An L-serine-binding site is contributed by glutamate 291. 355–358 (EISS) lines the ATP pocket. Serine 390 contributes to the L-serine binding site.

Belongs to the class-II aminoacyl-tRNA synthetase family. Type-1 seryl-tRNA synthetase subfamily. As to quaternary structure, homodimer. The tRNA molecule binds across the dimer.

It is found in the cytoplasm. It catalyses the reaction tRNA(Ser) + L-serine + ATP = L-seryl-tRNA(Ser) + AMP + diphosphate + H(+). The enzyme catalyses tRNA(Sec) + L-serine + ATP = L-seryl-tRNA(Sec) + AMP + diphosphate + H(+). It participates in aminoacyl-tRNA biosynthesis; selenocysteinyl-tRNA(Sec) biosynthesis; L-seryl-tRNA(Sec) from L-serine and tRNA(Sec): step 1/1. Its function is as follows. Catalyzes the attachment of serine to tRNA(Ser). Is also able to aminoacylate tRNA(Sec) with serine, to form the misacylated tRNA L-seryl-tRNA(Sec), which will be further converted into selenocysteinyl-tRNA(Sec). This Neisseria meningitidis serogroup A / serotype 4A (strain DSM 15465 / Z2491) protein is Serine--tRNA ligase.